A 262-amino-acid polypeptide reads, in one-letter code: Ornithine carbamoyltransferase (262 aa).

Carbamoyl phosphate contacts are provided by residues 3–7 (STRTR), Q30, R54, and 81–84 (HPTQ). Residues N114, D178, and 182–183 (SM) contribute to the L-ornithine site. Carbamoyl phosphate contacts are provided by residues 219–222 (HCLP) and T247.

This sequence belongs to the aspartate/ornithine carbamoyltransferase superfamily. OTCase family.

The protein resides in the cytoplasm. It catalyses the reaction carbamoyl phosphate + L-ornithine = L-citrulline + phosphate + H(+). It functions in the pathway amino-acid biosynthesis; L-arginine biosynthesis; L-arginine from L-ornithine and carbamoyl phosphate: step 1/3. In Neisseria cinerea, this protein is Ornithine carbamoyltransferase (argF).